Consider the following 596-residue polypeptide: Alkaline phosphatase 4 (596 aa).

An N-terminal signal peptide occupies residues 1-20 (MHCLVILGFLLGSLVAFSWA). Aspartate 93 lines the Mg(2+) pocket. A Zn(2+)-binding site is contributed by aspartate 93. Serine 144 serves as the catalytic Phosphoserine intermediate. 2 residues coordinate Mg(2+): histidine 202 and threonine 204. Asparagine 262 and asparagine 297 each carry an N-linked (GlcNAc...) asparagine glycan. Residue glutamate 369 participates in Mg(2+) binding. Zn(2+)-binding residues include aspartate 374 and histidine 378. Asparagine 401 carries an N-linked (GlcNAc...) asparagine glycan. Residues aspartate 415 and histidine 416 each contribute to the Zn(2+) site. N-linked (GlcNAc...) asparagine glycans are attached at residues asparagine 464 and asparagine 470. Residue histidine 504 participates in Zn(2+) binding. Cysteine 539 and cysteine 550 are joined by a disulfide. Residues 548-566 (DSCEDHKDGQKDRPLDKPN) show a composition bias toward basic and acidic residues. A disordered region spans residues 548–570 (DSCEDHKDGQKDRPLDKPNPKRN). The GPI-anchor amidated asparagine moiety is linked to residue asparagine 570. Residues 571–591 (GATVVGASLIPILTAATAAIL) traverse the membrane as a helical segment. A propeptide spans 571–596 (GATVVGASLIPILTAATAAILRGRGL) (removed in mature form).

Belongs to the alkaline phosphatase family. Homodimer. Mg(2+) serves as cofactor. Requires Zn(2+) as cofactor. As to expression, ellipsoid body ring neurons in the adult brain and in the lower Malpighian tubule and ureter.

The protein resides in the cell membrane. It carries out the reaction a phosphate monoester + H2O = an alcohol + phosphate. Important role in neural and renal epithelial function. The chain is Alkaline phosphatase 4 from Drosophila melanogaster (Fruit fly).